A 785-amino-acid chain; its full sequence is Formin-like protein 3 (785 aa).

An N-terminal signal peptide occupies residues 1-20 (MGRLRLAFLAISLVVFVCVS). The tract at residues 96–145 (YDWLAPASSPNEPPAETPDESSPSPSEETPSVVAPSQSVPGPPRPPPQRE) is disordered. Residues 115–134 (ESSPSPSEETPSVVAPSQSV) are compositionally biased toward low complexity. Residues 154-174 (LIIAVASTAVLTFVFVALMFL) traverse the membrane as a helical segment. Disordered regions lie at residues 184–228 (AVGS…KKRS), 241–329 (EFST…APKT), and 730–785 (ETTK…SSPS). Over residues 201–223 (STGSTENSPTVASTSRKMFSVAS) the composition is skewed to polar residues. Pro residues predominate over residues 256 to 303 (LKLPPGRSAPPPPPAAAPPPQPPPPPPPKPQPPPPPKIARPPPAPPKG). Positions 321-747 (DSETGAPKTK…SGKKESEMTT (427 aa)) constitute an FH2 domain. Residues 745-754 (MTTSDSNQPS) show a composition bias toward polar residues. Over residues 773-785 (SDDSDDEEDSSPS) the composition is skewed to acidic residues.

Belongs to the formin-like family. Class-I subfamily.

Its subcellular location is the membrane. Its function is as follows. Acts as actin nucleation factor that directs the formation of actin cables and polarized growth in pollen tubes. This Arabidopsis thaliana (Mouse-ear cress) protein is Formin-like protein 3 (FH3).